The sequence spans 49 residues: Large ribosomal subunit protein bL33B (49 aa).

This sequence belongs to the bacterial ribosomal protein bL33 family.

The chain is Large ribosomal subunit protein bL33B from Bacillus cereus (strain ATCC 14579 / DSM 31 / CCUG 7414 / JCM 2152 / NBRC 15305 / NCIMB 9373 / NCTC 2599 / NRRL B-3711).